We begin with the raw amino-acid sequence, 509 residues long: Aspartic proteinase oryzasin-1 (509 aa).

Residues 1-24 (MGTRSVALVLLAAVLLQALLPASA) form the signal peptide. A propeptide spans 25–67 (AEGLVRIALKKRPIDENSRVAARLSGEEGARRLGLRGANSLGG) (activation peptide). The Peptidase A1 domain occupies 85 to 506 (YFGEIGVGTP…DYGKMRVGFA (422 aa)). Aspartate 103 is a catalytic residue. Cysteine 116 and cysteine 122 are joined by a disulfide. Asparagine 252 carries N-linked (GlcNAc...) asparagine glycosylation. Cysteine 281 and cysteine 285 form a disulfide bridge. Aspartate 290 is a catalytic residue. The 106-residue stretch at 315–420 (VVSQECKTVV…NQLCDKLPSP (106 aa)) folds into the Saposin B-type domain. 4 disulfide bridges follow: cysteine 320/cysteine 414, cysteine 345/cysteine 386, cysteine 351/cysteine 383, and cysteine 428/cysteine 465. Asparagine 400 carries an N-linked (GlcNAc...) asparagine glycan.

This sequence belongs to the peptidase A1 family.

The protein localises to the vacuole. Functionally, involved in the breakdown of propeptides of storage proteins in protein-storage vacuoles. The protein is Aspartic proteinase oryzasin-1 of Oryza sativa subsp. japonica (Rice).